A 366-amino-acid polypeptide reads, in one-letter code: Phospho-N-acetylmuramoyl-pentapeptide-transferase (366 aa).

10 consecutive transmembrane segments (helical) span residues 3-23 (QIFI…PVLI), 55-75 (IAIL…GLVF), 80-100 (PGVS…VGFA), 118-138 (AKLI…LQFP), 161-181 (IAVG…NIVI), 197-217 (LASG…FWQF), 235-255 (PLDL…FLWW), 262-282 (IFMG…LSIT), 287-307 (LLMI…VIQV), and 341-361 (FWLL…GEWL).

This sequence belongs to the glycosyltransferase 4 family. MraY subfamily. It depends on Mg(2+) as a cofactor.

It is found in the cell membrane. It catalyses the reaction UDP-N-acetyl-alpha-D-muramoyl-L-alanyl-gamma-D-glutamyl-meso-2,6-diaminopimeloyl-D-alanyl-D-alanine + di-trans,octa-cis-undecaprenyl phosphate = di-trans,octa-cis-undecaprenyl diphospho-N-acetyl-alpha-D-muramoyl-L-alanyl-D-glutamyl-meso-2,6-diaminopimeloyl-D-alanyl-D-alanine + UMP. The protein operates within cell wall biogenesis; peptidoglycan biosynthesis. Functionally, catalyzes the initial step of the lipid cycle reactions in the biosynthesis of the cell wall peptidoglycan: transfers peptidoglycan precursor phospho-MurNAc-pentapeptide from UDP-MurNAc-pentapeptide onto the lipid carrier undecaprenyl phosphate, yielding undecaprenyl-pyrophosphoryl-MurNAc-pentapeptide, known as lipid I. The chain is Phospho-N-acetylmuramoyl-pentapeptide-transferase from Corynebacterium urealyticum (strain ATCC 43042 / DSM 7109).